The chain runs to 205 residues: Proteasome subunit beta type-3 (205 aa).

Ser-31 bears the Phosphoserine mark. Lys-70 is covalently cross-linked (Glycyl lysine isopeptide (Lys-Gly) (interchain with G-Cter in ubiquitin)).

The protein belongs to the peptidase T1B family. The 26S proteasome consists of a 20S proteasome core and two 19S regulatory subunits. The 20S proteasome core is composed of 28 subunits that are arranged in four stacked rings, resulting in a barrel-shaped structure. The two end rings are each formed by seven alpha subunits, and the two central rings are each formed by seven beta subunits. The catalytic chamber with the active sites is on the inside of the barrel.

The protein resides in the cytoplasm. Its subcellular location is the nucleus. Non-catalytic component of the proteasome which degrades poly-ubiquitinated proteins in the cytoplasm and in the nucleus. It is essential for the regulated turnover of proteins and for the removal of misfolded proteins. The proteasome is a multicatalytic proteinase complex that is characterized by its ability to cleave peptides with Arg, Phe, Tyr, Leu, and Glu adjacent to the leaving group at neutral or slightly basic pH. It has an ATP-dependent proteolytic activity. This subunit may participate in the trypsin-like activity of the enzyme complex. This chain is Proteasome subunit beta type-3 (PUP3), found in Saccharomyces cerevisiae (strain ATCC 204508 / S288c) (Baker's yeast).